We begin with the raw amino-acid sequence, 309 residues long: Mitochondrial phosphate carrier protein 1, mitochondrial (309 aa).

Residues 1–15 lie on the Mitochondrial intermembrane side of the membrane; that stretch reads MTRVKSKLDEELSSP. A helical transmembrane segment spans residues 16–36; it reads WFYTVCTMGGMLSAGTTHLAI. Solcar repeat units follow at residues 16-100, 109-193, and 210-289; these read WFYT…FKTL, NRTS…SVEF, and QQLG…IKVL. Over 37–74 the chain is Mitochondrial matrix; it reads TPLDVLKVNMQVNPVKYNSIPSGFSTLLREHGHSYLWR. The chain crosses the membrane as a helical span at residues 75–94; the sequence is GWSGKLLGYGVQGGCRFGLY. The Mitochondrial intermembrane portion of the chain corresponds to 95–111; that stretch reads EYFKTLYSDVLPNHNRT. The helical transmembrane segment at 112–132 threads the bilayer; that stretch reads SIYFLSSASAQIFADMALCPF. Residues 133–167 are Mitochondrial matrix-facing; sequence EAIKVRVQTQPMFAKGLLDGFPRVYRSEGLAGFHR. A helical transmembrane segment spans residues 168–187; the sequence is GLFPLWCRNLPFSMVMFSTF. The Mitochondrial intermembrane portion of the chain corresponds to 188–208; sequence EQSVEFIYQKIIQKRKQDCSK. Residues 209 to 229 form a helical membrane-spanning segment; the sequence is AQQLGVTCLAGYTAGAVGTII. Residues 230–268 lie on the Mitochondrial matrix side of the membrane; the sequence is SNPADVVLSSLYNNKAKNVLQAVRNIGFVGLFTRSLPVR. Residues 269–289 form a helical membrane-spanning segment; sequence ITIVGPVITLQWFFYDAIKVL. Topologically, residues 290 to 309 are mitochondrial intermembrane; the sequence is SGFPTSGGVKKPVDAAKLSV.

This sequence belongs to the mitochondrial carrier (TC 2.A.29) family. As to expression, expressed in stems, leaves and flowers. Strong expression in the stamens of flowers.

It is found in the mitochondrion inner membrane. In terms of biological role, transport of phosphate groups from the cytosol to the mitochondrial matrix. Mediates salt stress tolerance through an ATP-dependent pathway and via modulation of the gibberellin metabolism. The polypeptide is Mitochondrial phosphate carrier protein 1, mitochondrial (MPT1) (Arabidopsis thaliana (Mouse-ear cress)).